The sequence spans 411 residues: Na(+)-translocating NADH-quinone reductase subunit F (411 aa).

Residues 6-26 (AIGGVAMFTLIIMGLVAIILA) traverse the membrane as a helical segment. The 2Fe-2S ferredoxin-type domain occupies 35 to 129 (GDVTIHINDN…DMKIEIDPEF (95 aa)). [2Fe-2S] cluster-binding residues include cysteine 72, cysteine 78, cysteine 81, and cysteine 113. The 142-residue stretch at 132–273 (VQKWECEVIS…SGPYGEFFAK (142 aa)) folds into the FAD-binding FR-type domain.

The protein belongs to the NqrF family. Composed of six subunits; NqrA, NqrB, NqrC, NqrD, NqrE and NqrF. It depends on [2Fe-2S] cluster as a cofactor. FAD is required as a cofactor.

It localises to the cell inner membrane. It catalyses the reaction a ubiquinone + n Na(+)(in) + NADH + H(+) = a ubiquinol + n Na(+)(out) + NAD(+). NQR complex catalyzes the reduction of ubiquinone-1 to ubiquinol by two successive reactions, coupled with the transport of Na(+) ions from the cytoplasm to the periplasm. The first step is catalyzed by NqrF, which accepts electrons from NADH and reduces ubiquinone-1 to ubisemiquinone by a one-electron transfer pathway. This Psychrobacter cryohalolentis (strain ATCC BAA-1226 / DSM 17306 / VKM B-2378 / K5) protein is Na(+)-translocating NADH-quinone reductase subunit F.